The primary structure comprises 254 residues: Imidazole glycerol phosphate synthase subunit HisF (254 aa).

Active-site residues include Asp11 and Asp130.

The protein belongs to the HisA/HisF family. As to quaternary structure, heterodimer of HisH and HisF.

It is found in the cytoplasm. It catalyses the reaction 5-[(5-phospho-1-deoxy-D-ribulos-1-ylimino)methylamino]-1-(5-phospho-beta-D-ribosyl)imidazole-4-carboxamide + L-glutamine = D-erythro-1-(imidazol-4-yl)glycerol 3-phosphate + 5-amino-1-(5-phospho-beta-D-ribosyl)imidazole-4-carboxamide + L-glutamate + H(+). It functions in the pathway amino-acid biosynthesis; L-histidine biosynthesis; L-histidine from 5-phospho-alpha-D-ribose 1-diphosphate: step 5/9. Functionally, IGPS catalyzes the conversion of PRFAR and glutamine to IGP, AICAR and glutamate. The HisF subunit catalyzes the cyclization activity that produces IGP and AICAR from PRFAR using the ammonia provided by the HisH subunit. The polypeptide is Imidazole glycerol phosphate synthase subunit HisF (Chromobacterium violaceum (strain ATCC 12472 / DSM 30191 / JCM 1249 / CCUG 213 / NBRC 12614 / NCIMB 9131 / NCTC 9757 / MK)).